The chain runs to 634 residues: Threonine--tRNA ligase (634 aa).

The region spanning 1-61 is the TGS domain; sequence MINIRFPDGS…NSNCELRLIT (61 aa). The segment at 241–532 is catalytic; sequence DHRKIGKVLD…LIEHYAGNLP (292 aa). 3 residues coordinate Zn(2+): C332, H383, and H509.

This sequence belongs to the class-II aminoacyl-tRNA synthetase family. As to quaternary structure, homodimer. Zn(2+) is required as a cofactor.

The protein localises to the cytoplasm. The catalysed reaction is tRNA(Thr) + L-threonine + ATP = L-threonyl-tRNA(Thr) + AMP + diphosphate + H(+). Functionally, catalyzes the attachment of threonine to tRNA(Thr) in a two-step reaction: L-threonine is first activated by ATP to form Thr-AMP and then transferred to the acceptor end of tRNA(Thr). Also edits incorrectly charged L-seryl-tRNA(Thr). The polypeptide is Threonine--tRNA ligase (Francisella tularensis subsp. holarctica (strain OSU18)).